The chain runs to 420 residues: Gamma-glutamyl phosphate reductase (420 aa).

It belongs to the gamma-glutamyl phosphate reductase family.

The protein localises to the cytoplasm. It carries out the reaction L-glutamate 5-semialdehyde + phosphate + NADP(+) = L-glutamyl 5-phosphate + NADPH + H(+). It participates in amino-acid biosynthesis; L-proline biosynthesis; L-glutamate 5-semialdehyde from L-glutamate: step 2/2. Catalyzes the NADPH-dependent reduction of L-glutamate 5-phosphate into L-glutamate 5-semialdehyde and phosphate. The product spontaneously undergoes cyclization to form 1-pyrroline-5-carboxylate. The polypeptide is Gamma-glutamyl phosphate reductase (Neisseria meningitidis serogroup C (strain 053442)).